A 312-amino-acid polypeptide reads, in one-letter code: Olfactory receptor 6C76 (312 aa).

The Extracellular portion of the chain corresponds to 1 to 23 (MKNRTSVTDFILLGLTDNPQLQV). The N-linked (GlcNAc...) asparagine glycan is linked to asparagine 3. Residues 24–44 (VIFSFLFLTYVLSVTGNLTII) traverse the membrane as a helical segment. The Cytoplasmic segment spans residues 45–57 (SLTLLDSHLKTPM). A helical transmembrane segment spans residues 58-80 (YFFLRNFSLEISFTSVCNPRFLI). Over 81 to 94 (SILTGDKSISYNAC) the chain is Extracellular. A disulfide bond links cysteine 94 and cysteine 176. A helical membrane pass occupies residues 95-115 (AAQLFFFIFLGSTEFFLLASM). Residues 116 to 142 (SYDCYVAICKPLHYTTIMSDRICYQLI) lie on the Cytoplasmic side of the membrane. Residues 143–163 (ISSWLAGFLVIFPPLAMGLQL) form a helical membrane-spanning segment. Residues 164-195 (DFCDSNVIDHFTCDSAPLLQISCTDTSTLELM) lie on the Extracellular side of the membrane. A helical membrane pass occupies residues 196-216 (SFILALFTLISTLILVILSYT). Residues 217-238 (YIIRTILRIPSAQQRKKAFSTC) lie on the Cytoplasmic side of the membrane. Residues 239–259 (SSHVIVVSISYGSCIFMYVKT) form a helical membrane-spanning segment. The Extracellular segment spans residues 260–267 (SAKEGVAL). The chain crosses the membrane as a helical span at residues 268 to 288 (TKGVAILNTSVAPMLNPFIYT). Residues 289–312 (LRNQQVKQAFKDVLRKISHKKKKH) are Cytoplasmic-facing.

This sequence belongs to the G-protein coupled receptor 1 family.

The protein localises to the cell membrane. In terms of biological role, odorant receptor. The sequence is that of Olfactory receptor 6C76 (OR6C76) from Homo sapiens (Human).